Consider the following 111-residue polypeptide: uncharacterized protein (111 aa).

2 helical membrane passes run 29–49 and 52–72; these read LLNF…ATAV and ACFA…YLLA.

It localises to the membrane. This is an uncharacterized protein from Saccharomyces cerevisiae (strain ATCC 204508 / S288c) (Baker's yeast).